The primary structure comprises 622 residues: Sodium/potassium/calcium exchanger 4 (622 aa).

The N-terminal stretch at 1–38 is a signal peptide; sequence MALRGLIRQSKVRRRREMLPQQVGFVCAVLALVCCASG. The Extracellular portion of the chain corresponds to 39–97; that stretch reads LFGSLGHKTASAGKHVLLDTWRNRKLMAPINGTPLAKNCTDPAIHEFPTDLFSNKERQH. N-linked (GlcNAc...) asparagine glycosylation occurs at Asn-76. The helical transmembrane segment at 98–118 threads the bilayer; sequence GAVLLHILGALYMFYALAIVC. Residues 119–142 are Cytoplasmic-facing; the sequence is DDFFVPSLEKICEKLHLSEDVAGA. One copy of the Alpha-1 repeat lies at 139-179; sequence VAGATFMAAGSSTPELFASVIGVFITHGDVGVGTIVGSAVF. A helical membrane pass occupies residues 143 to 163; it reads TFMAAGSSTPELFASVIGVFI. Residues 164–172 lie on the Extracellular side of the membrane; the sequence is THGDVGVGT. Residues 173-193 traverse the membrane as a helical segment; that stretch reads IVGSAVFNILCIIGVCGLFAG. Over 194–200 the chain is Cytoplasmic; it reads QVVRLTW. Residues 201–221 traverse the membrane as a helical segment; that stretch reads WAVCRDSVYYTLSVIVLIAFI. The Extracellular segment spans residues 222 to 224; the sequence is YDE. A helical membrane pass occupies residues 225–245; the sequence is EIVWWEGLVLIILYVFYILIM. The Cytoplasmic segment spans residues 246–457; it reads KYNMKMQTFF…RWEKFFMVTF (212 aa). The segment at 358-408 is disordered; that stretch reads ANGVNSKPLQNGRHENMENGNVPVENPEDPQQGQEQQPPPQPPPPEPESVE. Positions 394-404 are enriched in pro residues; sequence QPPPQPPPPEP. A helical transmembrane segment spans residues 458 to 478; the sequence is ITATLWIAVFSYLMVWLVTII. Position 479 (Gly-479) is a topological domain, extracellular. A helical membrane pass occupies residues 480–500; it reads YTLGIPDVIMGITFLAAGTSV. The stretch at 495–526 is one Alpha-2 repeat; the sequence is AAGTSVPDCMASLIVARQGLGDMAVSNTIGSN. Topologically, residues 501-526 are cytoplasmic; the sequence is PDCMASLIVARQGLGDMAVSNTIGSN. The helical transmembrane segment at 527 to 547 threads the bilayer; it reads VFDILVGLGIPWGLQTMVINY. The Extracellular segment spans residues 548–557; that stretch reads GSTVKINSRG. Residues 558-578 traverse the membrane as a helical segment; the sequence is LVYSVVLLLGSVALTVLGIHL. Residues 579–586 lie on the Cytoplasmic side of the membrane; it reads NKWRLDRK. A helical membrane pass occupies residues 587–607; that stretch reads LGIYVLVLYAVFLCFSIMIEF. The Extracellular segment spans residues 608-622; the sequence is NVFTFVNLPMCREDD.

This sequence belongs to the Ca(2+):cation antiporter (CaCA) (TC 2.A.19) family. SLC24A subfamily. In terms of tissue distribution, expressed in late secretory-stage and maturation-stage ameloblasts, with significantly increased expression during the late stages of amelogenesis (at protein level). Widely expressed in most regions of the brain, including hippocampus, neocortex, thalamus, striatum and olfactory bulb. Expressed in the olfactory sensory neurons.

It is found in the cell membrane. It localises to the cytoplasm. It catalyses the reaction Ca(2+)(out) + K(+)(out) + 4 Na(+)(in) = Ca(2+)(in) + K(+)(in) + 4 Na(+)(out). Functionally, calcium, potassium:sodium antiporter that transports 1 Ca(2+) and 1 K(+) in exchange for 4 Na(+). Controls the rapid response termination and proper regulation of adaptation in olfactory sensory neurons (OSNs) which subsequently influences how odor information is encoded and perceived. May play a role in calcium transport during amelogenesis. The sequence is that of Sodium/potassium/calcium exchanger 4 from Mus musculus (Mouse).